We begin with the raw amino-acid sequence, 122 residues long: Large ribosomal subunit protein uL14 (122 aa).

The protein belongs to the universal ribosomal protein uL14 family. As to quaternary structure, part of the 50S ribosomal subunit. Forms a cluster with proteins L3 and L19. In the 70S ribosome, L14 and L19 interact and together make contacts with the 16S rRNA in bridges B5 and B8.

In terms of biological role, binds to 23S rRNA. Forms part of two intersubunit bridges in the 70S ribosome. The polypeptide is Large ribosomal subunit protein uL14 (Streptococcus suis (strain 05ZYH33)).